A 460-amino-acid chain; its full sequence is Kynureninase (460 aa).

Residues Leu-116, Thr-117, 144-147 (FPSD), Ser-199, Asp-228, His-231, and Tyr-253 contribute to the pyridoxal 5'-phosphate site. Position 254 is an N6-(pyridoxal phosphate)lysine (Lys-254). 2 residues coordinate pyridoxal 5'-phosphate: Trp-288 and Asn-316.

The protein belongs to the kynureninase family. As to quaternary structure, homodimer. Pyridoxal 5'-phosphate is required as a cofactor.

The protein localises to the cytoplasm. It catalyses the reaction L-kynurenine + H2O = anthranilate + L-alanine + H(+). The enzyme catalyses 3-hydroxy-L-kynurenine + H2O = 3-hydroxyanthranilate + L-alanine + H(+). The protein operates within amino-acid degradation; L-kynurenine degradation; L-alanine and anthranilate from L-kynurenine: step 1/1. Its pathway is cofactor biosynthesis; NAD(+) biosynthesis; quinolinate from L-kynurenine: step 2/3. Its function is as follows. Catalyzes the cleavage of L-kynurenine (L-Kyn) and L-3-hydroxykynurenine (L-3OHKyn) into anthranilic acid (AA) and 3-hydroxyanthranilic acid (3-OHAA), respectively. The chain is Kynureninase from Debaryomyces hansenii (strain ATCC 36239 / CBS 767 / BCRC 21394 / JCM 1990 / NBRC 0083 / IGC 2968) (Yeast).